We begin with the raw amino-acid sequence, 655 residues long: p-hydroxybenzoic acid efflux pump subunit AaeB (655 aa).

Topologically, residues 1 to 12 are periplasmic; the sequence is MGIFSIANQHIR. A helical membrane pass occupies residues 13-33; sequence FAVKLATAIVLALFVGFHFQL. Topologically, residues 34–37 are cytoplasmic; it reads ETPR. A helical membrane pass occupies residues 38–58; it reads WAVLTAAIVAAGPAFAAGGEP. At 59-68 the chain is on the periplasmic side; it reads YSGAIRYRGF. A helical membrane pass occupies residues 69–89; it reads LRIIGTFIGCIAGLVIIIAMI. Residues 90-92 are Cytoplasmic-facing; it reads RAP. A helical membrane pass occupies residues 93 to 113; it reads LLMILVCCIWAGFCTWISSLV. At 114 to 120 the chain is on the periplasmic side; the sequence is RIENSYA. Residues 121–141 form a helical membrane-spanning segment; the sequence is WGLAGYTALIIVITIQPEPLL. Topologically, residues 142–151 are cytoplasmic; the sequence is TPQFAVERCS. A helical membrane pass occupies residues 152–172; that stretch reads EIVIGIVCAIMADLLFSPRSI. Residues 173–369 lie on the Periplasmic side of the membrane; the sequence is KQEVDRELES…RTTLSCILGT (197 aa). A helical membrane pass occupies residues 370 to 390; it reads LFWLWTGWTSGSGAMVMIAVV. The Cytoplasmic segment spans residues 391 to 406; sequence TSLAMRLPNPRMVAID. The helical transmembrane segment at 407–427 threads the bilayer; that stretch reads FIYGTLAALPLGLLYFLVIIP. The Periplasmic portion of the chain corresponds to 428 to 430; it reads NTQ. A helical membrane pass occupies residues 431–451; that stretch reads QSMLLLCISLAVLGFFLGIEV. The Cytoplasmic segment spans residues 452-458; the sequence is QKRRLGS. The helical transmembrane segment at 459-479 threads the bilayer; sequence MGALASTINIIVLDNPMTFHF. Over 480-481 the chain is Periplasmic; it reads SQ. The chain crosses the membrane as a helical span at residues 482 to 502; sequence FLDSALGQIVGCVLAFTVILL. The Cytoplasmic portion of the chain corresponds to 503–655; it reads VRDKSRDRTG…HKYQHALTDS (153 aa).

The protein belongs to the aromatic acid exporter ArAE (TC 2.A.85) family.

The protein localises to the cell inner membrane. Its function is as follows. Forms an efflux pump with AaeA. Could function as a metabolic relief valve, allowing to eliminate certain compounds when they accumulate to high levels in the cell. The sequence is that of p-hydroxybenzoic acid efflux pump subunit AaeB from Shigella flexneri.